A 402-amino-acid polypeptide reads, in one-letter code: Fugralins biosynthesis cluster protein 2 (402 aa).

5 consecutive transmembrane segments (helical) span residues 28-48 (NCLA…CFLL), 109-129 (ILIF…AILV), 145-165 (IFWW…TAIV), 232-252 (VIFG…AVTV), and 264-284 (LAPL…IVCV). Disordered stretches follow at residues 312 to 335 (NPNT…TGPK) and 378 to 402 (TQDN…PWGV). Residues 324-334 (TKGSQLSSTGP) are compositionally biased toward polar residues. The N-linked (GlcNAc...) asparagine glycan is linked to asparagine 381.

This sequence belongs to the SAT4 family.

The protein localises to the membrane. Its pathway is secondary metabolite biosynthesis. Functionally, part of the gene cluster that mediates the biosynthesis of the tetraketides fugralins such as linear fugralin A and cyclic fugralin B, volatile compounds that play a role in the asexual reproductive cycle but are not involved in pathogenicity. One of the key features of fugralins is the presence of a double methyl group, which is only rarely encountered in fungal secondary metabolites. As the fugralins cluster does not contain an independent methyltransferase, the PKS FGR1 is probably responsible for adding two methyl groups to the same carbon atom. Fugralin B is similar to fugralin A except for a cyclization between the carboxylic acid C-8 and the alcohol on C-4 resulting in a six membered lactone ring, probably catalyzed by the cyclase FGR4. The exact role of the individual cluster genes remains unknown and further work is needed to unravel the biosynthetic pathway. This chain is Fugralins biosynthesis cluster protein 2, found in Gibberella zeae (strain ATCC MYA-4620 / CBS 123657 / FGSC 9075 / NRRL 31084 / PH-1) (Wheat head blight fungus).